The primary structure comprises 625 residues: Coagulation factor XI (625 aa).

The N-terminal stretch at 1-18 (MIFLYQVVHFILFTSVSG) is a signal peptide. 4 Apple domains span residues 20–103 (CVTQ…FKQC), 110–193 (CNKD…LKSC), 200–283 (CIRD…LQSC), and 291–374 (CHSS…LRLC). Intrachain disulfides connect cysteine 20–cysteine 103, cysteine 46–cysteine 76, cysteine 50–cysteine 56, cysteine 110–cysteine 193, cysteine 136–cysteine 165, cysteine 140–cysteine 146, cysteine 200–cysteine 283, cysteine 226–cysteine 255, cysteine 230–cysteine 236, cysteine 291–cysteine 374, cysteine 317–cysteine 346, cysteine 321–cysteine 327, cysteine 380–cysteine 500, cysteine 416–cysteine 432, cysteine 514–cysteine 581, cysteine 545–cysteine 560, and cysteine 571–cysteine 599. N-linked (GlcNAc...) (complex) asparagine glycans are attached at residues asparagine 90 and asparagine 126. A glycan (N-linked (GlcNAc...) (complex) asparagine; atypical) is linked at asparagine 163. The Peptidase S1 domain occupies 388–623 (IVGGTASVRG…YVDWILEKTQ (236 aa)). The active-site Charge relay system is the histidine 431. The N-linked (GlcNAc...) (complex) asparagine glycan is linked to asparagine 450. The Charge relay system role is filled by aspartate 480. The N-linked (GlcNAc...) (complex) asparagine glycan is linked to asparagine 491. 547-550 (KRYR) is a binding site for heparin. Residue serine 575 is the Charge relay system of the active site.

The protein belongs to the peptidase S1 family. Plasma kallikrein subfamily. Homodimer; disulfide-linked. Can form non-covalently bonded homodimers. After activation the heavy and light chains are also linked by a disulfide bond. Interacts (activated) with F9 (inactive and activated) in calcium-dependent manner. Forms a heterodimer with SERPINA5. Interacts with Anopheles gambiae D7L2. Interacts (activated) with guianensin, an anticoagulant protein from Simulium guianense saliva. Post-translationally, N-glycosylated on both chains. N-glycosylated sites mainly consist of nonfucosylated sialylated biantennary (in high abundance) and/or triantennary (in low abundance) complex structures. Glycosylation at Asn-163 uses a rare non-canonical Asn-X-Cys glycosite. Activated by factor XIIa (or XII), which cleaves each polypeptide after Arg-387 into the light chain, which contains the active site, and the heavy chain, which associates with high molecular weight (HMW) kininogen. Activated by F12 (activated); the presence of negatively charged surfaces accelerates activation. Activated by F2 (thrombin); the presence of negatively charged surfaces, such as polyphosphate and dextran sulfate, strongly accelerates activation. Autoactivated; the presence of negatively charged surfaces, such as polyphosphate and dextran sulfate, accelerates autoactivation and autolysis. In terms of tissue distribution, isoform 2 is produced by platelets and megakaryocytes but absent from other blood cells.

The protein localises to the secreted. It carries out the reaction Selective cleavage of Arg-|-Ala and Arg-|-Val bonds in factor IX to form factor IXa.. With respect to regulation, inhibited by SERPINA5. In terms of biological role, factor XI triggers the middle phase of the intrinsic pathway of blood coagulation by activating factor IX. The sequence is that of Coagulation factor XI (F11) from Homo sapiens (Human).